The following is a 74-amino-acid chain: Peptide ToAP4 (74 aa).

A signal peptide spans 1–22 (MQIKHLITLFFLVLIVADQCSA). Lysine 39 bears the Lysine amide mark. The propeptide occupies 40-74 (GGRRKREIAAQIEQYRDLQKREAELEELLDRLPMF).

The protein belongs to the non-disulfide-bridged peptide (NDBP) superfamily. Short antimicrobial peptide (group 4) family. In terms of tissue distribution, expressed by the venom gland.

The protein localises to the secreted. Its function is as follows. Shows anti-inflammatory activities, since it decreases release of pro-inflammatory cytokines, and increases release of anti-inflammatory cytokines. Acts by blocking the Toll-like receptor 4 (TLR4). Also increases MHC-II expression in LPS-stimulated cells. Does not show antibacterial activity on Mycobacterium abscessus subsp. massiliense. Does not show antifungal activity. Has low hemolytic activity on human erythrocyte and low monocyte cytotoxicity. In vivo, does not induce immune cell migration. Helical wheel projections predict an amphipathic peptide with distinct hydrophobic and hydrophilic faces. This chain is Peptide ToAP4, found in Tityus obscurus (Amazonian scorpion).